A 214-amino-acid chain; its full sequence is Thymidylate kinase (214 aa).

ATP is bound at residue 11–18; that stretch reads GPEGAGKT.

This sequence belongs to the thymidylate kinase family.

The enzyme catalyses dTMP + ATP = dTDP + ADP. Its function is as follows. Phosphorylation of dTMP to form dTDP in both de novo and salvage pathways of dTTP synthesis. The polypeptide is Thymidylate kinase (Leuconostoc citreum (strain KM20)).